The sequence spans 128 residues: Small ribosomal subunit protein bS6 (128 aa).

This sequence belongs to the bacterial ribosomal protein bS6 family.

Functionally, binds together with bS18 to 16S ribosomal RNA. This Thermotoga petrophila (strain ATCC BAA-488 / DSM 13995 / JCM 10881 / RKU-1) protein is Small ribosomal subunit protein bS6.